A 255-amino-acid chain; its full sequence is DNA repair protein RecO (255 aa).

It belongs to the RecO family.

Involved in DNA repair and RecF pathway recombination. The sequence is that of DNA repair protein RecO from Listeria monocytogenes serotype 4a (strain HCC23).